The sequence spans 235 residues: Ribitol-5-phosphate cytidylyltransferase (235 aa).

CTP contacts are provided by residues 7-10, 82-88, and S113; these read LAGG and GADRNTS.

This sequence belongs to the IspD/TarI cytidylyltransferase family. TarI subfamily.

The enzyme catalyses D-ribitol 5-phosphate + CTP + H(+) = CDP-L-ribitol + diphosphate. It functions in the pathway cell wall biogenesis; poly(ribitol phosphate) teichoic acid biosynthesis. Functionally, catalyzes the transfer of the cytidylyl group of CTP to D-ribitol 5-phosphate. This Streptococcus pneumoniae serotype 2 (strain D39 / NCTC 7466) protein is Ribitol-5-phosphate cytidylyltransferase.